The following is a 281-amino-acid chain: Bifunctional protein FolD (281 aa).

NADP(+) contacts are provided by residues 165-167 (GRS) and Ser190.

It belongs to the tetrahydrofolate dehydrogenase/cyclohydrolase family. In terms of assembly, homodimer.

The enzyme catalyses (6R)-5,10-methylene-5,6,7,8-tetrahydrofolate + NADP(+) = (6R)-5,10-methenyltetrahydrofolate + NADPH. It carries out the reaction (6R)-5,10-methenyltetrahydrofolate + H2O = (6R)-10-formyltetrahydrofolate + H(+). The protein operates within one-carbon metabolism; tetrahydrofolate interconversion. Catalyzes the oxidation of 5,10-methylenetetrahydrofolate to 5,10-methenyltetrahydrofolate and then the hydrolysis of 5,10-methenyltetrahydrofolate to 10-formyltetrahydrofolate. In Polaromonas naphthalenivorans (strain CJ2), this protein is Bifunctional protein FolD.